We begin with the raw amino-acid sequence, 177 residues long: NAD(P)H-quinone oxidoreductase subunit 6, chloroplastic (177 aa).

A run of 5 helical transmembrane segments spans residues 10-30 (ILLV…VLLT), 32-52 (PIYS…FHIL), 61-81 (AQLL…VMFM), 93-115 (WTVG…IATI), and 152-172 (FFLP…GAIA).

Belongs to the complex I subunit 6 family. NDH is composed of at least 16 different subunits, 5 of which are encoded in the nucleus.

The protein localises to the plastid. It localises to the chloroplast thylakoid membrane. The enzyme catalyses a plastoquinone + NADH + (n+1) H(+)(in) = a plastoquinol + NAD(+) + n H(+)(out). The catalysed reaction is a plastoquinone + NADPH + (n+1) H(+)(in) = a plastoquinol + NADP(+) + n H(+)(out). Functionally, NDH shuttles electrons from NAD(P)H:plastoquinone, via FMN and iron-sulfur (Fe-S) centers, to quinones in the photosynthetic chain and possibly in a chloroplast respiratory chain. The immediate electron acceptor for the enzyme in this species is believed to be plastoquinone. Couples the redox reaction to proton translocation, and thus conserves the redox energy in a proton gradient. The polypeptide is NAD(P)H-quinone oxidoreductase subunit 6, chloroplastic (ndhG) (Amborella trichopoda).